Here is a 155-residue protein sequence, read N- to C-terminus: MKLQLWTIGKTNDAYLKEGCAQYTKRLPHYLPFEYLEIPEPKNTKLSSDVLKKEEEKLIFDRLQDSDQLILLDEKGNEFTSTEFGQYIQKKMNSVAGNLIFLIGGPYGFSDAVYKRANGKIALSKMTFSHQMVRLFALEQLYRACTIIKGEKYHH.

Residues L72, G104, and 123-128 (LSKMTF) contribute to the S-adenosyl-L-methionine site.

It belongs to the RNA methyltransferase RlmH family. In terms of assembly, homodimer.

The protein localises to the cytoplasm. It carries out the reaction pseudouridine(1915) in 23S rRNA + S-adenosyl-L-methionine = N(3)-methylpseudouridine(1915) in 23S rRNA + S-adenosyl-L-homocysteine + H(+). Functionally, specifically methylates the pseudouridine at position 1915 (m3Psi1915) in 23S rRNA. The sequence is that of Ribosomal RNA large subunit methyltransferase H from Cytophaga hutchinsonii (strain ATCC 33406 / DSM 1761 / CIP 103989 / NBRC 15051 / NCIMB 9469 / D465).